Reading from the N-terminus, the 139-residue chain is ATP synthase epsilon chain (139 aa).

It belongs to the ATPase epsilon chain family. F-type ATPases have 2 components, CF(1) - the catalytic core - and CF(0) - the membrane proton channel. CF(1) has five subunits: alpha(3), beta(3), gamma(1), delta(1), epsilon(1). CF(0) has three main subunits: a, b and c.

Its subcellular location is the cell membrane. In terms of biological role, produces ATP from ADP in the presence of a proton gradient across the membrane. This chain is ATP synthase epsilon chain, found in Levilactobacillus brevis (strain ATCC 367 / BCRC 12310 / CIP 105137 / JCM 1170 / LMG 11437 / NCIMB 947 / NCTC 947) (Lactobacillus brevis).